A 329-amino-acid polypeptide reads, in one-letter code: Apolipoprotein E (329 aa).

A signal peptide spans 1–18 (MKVLWAALVVALLAGCWA). 8 repeat units span residues 92–113 (TLME…EQLG), 114–135 (PMAS…ARLR), 136–157 (SDME…AMLG), 158–179 (QSTE…KRVL), 180–201 (RDAE…EGAE), 202–223 (RSVS…TRHA), 224–245 (KVDA…QQLR), and 246–267 (GRLE…EQME). An 8 X 22 AA approximate tandem repeats region spans residues 92–267 (TLMEETMKEI…HLDEVREQME (176 aa)). Methionine 155 carries the post-translational modification Methionine sulfoxide. Serine 159 carries the phosphoserine modification. Positions 170-180 (HMRKLRKRVLR) are LDL and other lipoprotein receptors binding. Position 174-177 (174-177 (LRKR)) interacts with heparin. The tract at residues 222-302 (HAKVDALATQ…GWFEPLVEDM (81 aa)) is lipid-binding and lipoprotein association. Heparin is bound at residue 241-248 (GQQLRGRL). The interval 278–329 (NQMRQQAEAFQARLKGWFEPLVEDMQRQWAVLVEKVQAAVGTSPTTPPVETK) is homooligomerization. The interval 290–302 (RLKGWFEPLVEDM) is specificity for association with VLDL.

This sequence belongs to the apolipoprotein A1/A4/E family. As to quaternary structure, homotetramer. May interact with ABCA1; functionally associated with ABCA1 in the biogenesis of HDLs. May interact with APP/A4 amyloid-beta peptide; the interaction is extremely stable in vitro but its physiological significance is unclear. May interact with MAPT. May interact with MAP2. In the cerebrospinal fluid, interacts with secreted SORL1. Interacts with PMEL; this allows the loading of PMEL luminal fragment on ILVs to induce fibril nucleation. In terms of processing, APOE exists as multiple glycosylated and sialylated glycoforms within cells and in plasma. The extent of glycosylation and sialylation are tissue and context specific. Post-translationally, glycated in plasma VLDL. Phosphorylated by FAM20C in the extracellular medium.

It is found in the secreted. It localises to the extracellular space. The protein localises to the extracellular matrix. The protein resides in the extracellular vesicle. Its subcellular location is the endosome. It is found in the multivesicular body. APOE is an apolipoprotein, a protein associating with lipid particles, that mainly functions in lipoprotein-mediated lipid transport between organs via the plasma and interstitial fluids. APOE is a core component of plasma lipoproteins and is involved in their production, conversion and clearance. Apolipoproteins are amphipathic molecules that interact both with lipids of the lipoprotein particle core and the aqueous environment of the plasma. As such, APOE associates with chylomicrons, chylomicron remnants, very low density lipoproteins (VLDL) and intermediate density lipoproteins (IDL) but shows a preferential binding to high-density lipoproteins (HDL). It also binds a wide range of cellular receptors including the LDL receptor/LDLR, the LDL receptor-related proteins LRP1, LRP2 and LRP8 and the very low-density lipoprotein receptor/VLDLR that mediate the cellular uptake of the APOE-containing lipoprotein particles. Finally, APOE also has a heparin-binding activity and binds heparan-sulfate proteoglycans on the surface of cells, a property that supports the capture and the receptor-mediated uptake of APOE-containing lipoproteins by cells. A main function of APOE is to mediate lipoprotein clearance through the uptake of chylomicrons, VLDLs, and HDLs by hepatocytes. APOE is also involved in the biosynthesis by the liver of VLDLs as well as their uptake by peripheral tissues ensuring the delivery of triglycerides and energy storage in muscle, heart and adipose tissues. By participating in the lipoprotein-mediated distribution of lipids among tissues, APOE plays a critical role in plasma and tissues lipid homeostasis. APOE is also involved in two steps of reverse cholesterol transport, the HDLs-mediated transport of cholesterol from peripheral tissues to the liver, and thereby plays an important role in cholesterol homeostasis. First, it is functionally associated with ABCA1 in the biogenesis of HDLs in tissues. Second, it is enriched in circulating HDLs and mediates their uptake by hepatocytes. APOE also plays an important role in lipid transport in the central nervous system, regulating neuron survival and sprouting. The polypeptide is Apolipoprotein E (APOE) (Eumetopias jubatus (Steller sea lion)).